The following is a 462-amino-acid chain: A-type ATP synthase subunit B (462 aa).

Belongs to the ATPase alpha/beta chains family. Has multiple subunits with at least A(3), B(3), C, D, E, F, H, I and proteolipid K(x).

It is found in the cell membrane. Component of the A-type ATP synthase that produces ATP from ADP in the presence of a proton gradient across the membrane. The B chain is a regulatory subunit. This is A-type ATP synthase subunit B from Methanococcus maripaludis (strain DSM 14266 / JCM 13030 / NBRC 101832 / S2 / LL).